A 243-amino-acid chain; its full sequence is Adenosine 5'-phosphosulfate reductase (243 aa).

[4Fe-4S] cluster is bound by residues C126, C127, C209, and C212. C235 (nucleophile; cysteine thiosulfonate intermediate) is an active-site residue.

Belongs to the PAPS reductase family. CysH subfamily. [4Fe-4S] cluster is required as a cofactor.

It localises to the cytoplasm. It catalyses the reaction [thioredoxin]-disulfide + sulfite + AMP + 2 H(+) = adenosine 5'-phosphosulfate + [thioredoxin]-dithiol. It functions in the pathway sulfur metabolism; hydrogen sulfide biosynthesis; sulfite from sulfate. Catalyzes the formation of sulfite from adenosine 5'-phosphosulfate (APS) using thioredoxin as an electron donor. This is Adenosine 5'-phosphosulfate reductase from Staphylococcus epidermidis (strain ATCC 35984 / DSM 28319 / BCRC 17069 / CCUG 31568 / BM 3577 / RP62A).